Consider the following 752-residue polypeptide: Neuroendocrine convertase 1 (752 aa).

The signal sequence occupies residues 1–27 (MKQRGWTLQCTAFTLFCVWCALNSVKA). Residues 28-110 (KRQFVNEWAA…QQYEKERRKR (83 aa)) constitute a propeptide that is removed on maturation. Residues 129-450 (QWYLQDTRMT…FGLLNAKALV (322 aa)) enclose the Peptidase S8 domain. The active-site Charge relay system is the Asp-167. Asn-173 carries N-linked (GlcNAc...) asparagine glycosylation. His-208 functions as the Charge relay system in the catalytic mechanism. Cystine bridges form between Cys-225–Cys-374 and Cys-317–Cys-347. The Charge relay system role is filled by Ser-382. The N-linked (GlcNAc...) asparagine glycan is linked to Asn-401. The P/Homo B domain occupies 460–597 (NVPEKKECII…KLILHGTSSQ (138 aa)). Cys-467 and Cys-494 are oxidised to a cystine. The disordered stretch occupies residues 631–662 (PTQNSLNGNLLVPKNSSSSSVEDRRDEQVQGA). Asn-645 carries an N-linked (GlcNAc...) asparagine glycan.

It belongs to the peptidase S8 family. Furin subfamily. The cofactor is Ca(2+).

Its subcellular location is the cytoplasmic vesicle. The protein localises to the secretory vesicle. The enzyme catalyses Release of protein hormones, neuropeptides and renin from their precursors, generally by hydrolysis of -Lys-Arg-|- bonds.. Involved in the processing of hormone and other protein precursors at sites comprised of pairs of basic amino acid residues. Substrates include POMC, renin, enkephalin, dynorphin, somatostatin, insulin and AGRP. The polypeptide is Neuroendocrine convertase 1 (Pcsk1) (Rattus norvegicus (Rat)).